The following is a 514-amino-acid chain: Maturase K (514 aa).

Belongs to the intron maturase 2 family. MatK subfamily.

It is found in the plastid. The protein resides in the chloroplast. In terms of biological role, usually encoded in the trnK tRNA gene intron. Probably assists in splicing its own and other chloroplast group II introns. This chain is Maturase K, found in Dioon spinulosum (Gum palm).